Consider the following 478-residue polypeptide: Cytochrome c-552 (478 aa).

Residues 1–26 (MARKTLRARRFFSLIFPFFFMTSVYA) form the signal peptide. Heme c is bound at residue H94. Residues C122, C125, and K126 each contribute to the heme site. Positions 160, 163, 164, 209, 212, and 213 each coordinate heme c. E215, Y216, K261, and Q263 together coordinate Ca(2+). Y216 contributes to the substrate binding site. H264 is a binding site for substrate. Heme c-binding residues include H275, C282, C285, H286, H301, C314, C317, H318, and H393.

Belongs to the cytochrome c-552 family. Ca(2+) is required as a cofactor. It depends on heme c as a cofactor.

It is found in the periplasm. It catalyses the reaction 6 Fe(III)-[cytochrome c] + NH4(+) + 2 H2O = 6 Fe(II)-[cytochrome c] + nitrite + 8 H(+). The protein operates within nitrogen metabolism; nitrate reduction (assimilation). In terms of biological role, catalyzes the reduction of nitrite to ammonia, consuming six electrons in the process. This Salmonella arizonae (strain ATCC BAA-731 / CDC346-86 / RSK2980) protein is Cytochrome c-552.